The chain runs to 396 residues: Probable peptidoglycan glycosyltransferase FtsW (396 aa).

9 consecutive transmembrane segments (helical) span residues 17-37 (FCDG…WVMV), 61-81 (VFVL…MAWW), 83-103 (ANGP…LVAG), 117-137 (GIPL…VYLA), 159-179 (MVMA…AVVV), 198-218 (FLLL…AEPY), 274-294 (FVFA…VIGL), 316-336 (FAAY…FINI), and 350-370 (LPLL…VGML).

The protein belongs to the SEDS family. FtsW subfamily.

The protein resides in the cell inner membrane. It carries out the reaction [GlcNAc-(1-&gt;4)-Mur2Ac(oyl-L-Ala-gamma-D-Glu-L-Lys-D-Ala-D-Ala)](n)-di-trans,octa-cis-undecaprenyl diphosphate + beta-D-GlcNAc-(1-&gt;4)-Mur2Ac(oyl-L-Ala-gamma-D-Glu-L-Lys-D-Ala-D-Ala)-di-trans,octa-cis-undecaprenyl diphosphate = [GlcNAc-(1-&gt;4)-Mur2Ac(oyl-L-Ala-gamma-D-Glu-L-Lys-D-Ala-D-Ala)](n+1)-di-trans,octa-cis-undecaprenyl diphosphate + di-trans,octa-cis-undecaprenyl diphosphate + H(+). The protein operates within cell wall biogenesis; peptidoglycan biosynthesis. Functionally, peptidoglycan polymerase that is essential for cell division. This Halomonas elongata (strain ATCC 33173 / DSM 2581 / NBRC 15536 / NCIMB 2198 / 1H9) protein is Probable peptidoglycan glycosyltransferase FtsW.